The primary structure comprises 141 residues: Hemoglobin subunit alpha-A (141 aa).

The Globin domain occupies 1–141; the sequence is VLSAADKNNV…VGNVLTAKYR (141 aa). Histidine 58 is a binding site for O2. Histidine 87 contacts heme b.

Belongs to the globin family. Heterotetramer of two alpha chains and two beta chains. In terms of tissue distribution, red blood cells.

Involved in oxygen transport from the lung to the various peripheral tissues. The polypeptide is Hemoglobin subunit alpha-A (HBAA) (Francolinus pondicerianus (Grey francolin)).